Here is a 440-residue protein sequence, read N- to C-terminus: Chromosome partition protein MukF (440 aa).

A leucine-zipper region spans residues 208-236 (LSETSGTLRELQDTLEAAGDKLQANLLRI).

This sequence belongs to the MukF family. In terms of assembly, interacts, and probably forms a ternary complex, with MukE and MukB via its C-terminal region. The complex formation is stimulated by calcium or magnesium. It is required for an interaction between MukE and MukB.

It localises to the cytoplasm. The protein localises to the nucleoid. Functionally, involved in chromosome condensation, segregation and cell cycle progression. May participate in facilitating chromosome segregation by condensation DNA from both sides of a centrally located replisome during cell division. Not required for mini-F plasmid partitioning. Probably acts via its interaction with MukB and MukE. Overexpression results in anucleate cells. It has a calcium binding activity. This is Chromosome partition protein MukF from Yersinia pestis.